A 504-amino-acid chain; its full sequence is Zinc finger CCCH domain-containing protein 18 (504 aa).

The stretch at 40-69 forms a coiled coil; the sequence is SNADLLEVHEELLAAIKDAEEGLLHLKRSR. The tract at residues 77 to 105 is disordered; the sequence is IFPNQEPTSEAPEVAVDPPDDVEPEPLEP. The span at 94-104 shows a compositional bias: acidic residues; it reads PPDDVEPEPLE. The C3H1-type zinc-finger motif lies at 146 to 173; it reads SENMSMCKFFLQQRCRFGSNCRLSHGIV. The tract at residues 230–276 is disordered; it reads GSSARLPSDSLSISEYADESDEDGEGSSSDEGSDFSEDGDQEDESVH. 2 stretches are compositionally biased toward acidic residues: residues 245 to 254 and 260 to 272; these read YADESDEDGE and EGSDFSEDGDQED. A G-patch domain is found at 304–350; that stretch reads TRGVASKMMAKMGYREGMGLGVSGQGMLDPIPVKVLPPKQSLDHAVA. 3 disordered regions span residues 351-390, 406-432, and 482-504; these read ASEVNDSVGPGKKRSRGGKRKREKKFAEQARAAKAEEEER, AEGSAVKSKKDSSGEANGHAKKEDRRS, and EATHASATNAVARKEKEKKWLKF. The span at 361–374 shows a compositional bias: basic residues; it reads GKKRSRGGKRKREK. Basic and acidic residues-rich tracts occupy residues 375–390, 413–432, and 493–504; these read KFAEQARAAKAEEEER, SKKDSSGEANGHAKKEDRRS, and ARKEKEKKWLKF. Residues 430–500 are a coiled coil; the sequence is RRSLLAYDDE…AVARKEKEKK (71 aa).

In Oryza sativa subsp. japonica (Rice), this protein is Zinc finger CCCH domain-containing protein 18.